Reading from the N-terminus, the 575-residue chain is V-type ATP synthase alpha chain (575 aa).

Residue 238-245 coordinates ATP; that stretch reads GPFGAGKT.

This sequence belongs to the ATPase alpha/beta chains family.

It catalyses the reaction ATP + H2O + 4 H(+)(in) = ADP + phosphate + 5 H(+)(out). Functionally, produces ATP from ADP in the presence of a proton gradient across the membrane. The V-type alpha chain is a catalytic subunit. The chain is V-type ATP synthase alpha chain from Borreliella afzelii (strain PKo) (Borrelia afzelii).